A 245-amino-acid chain; its full sequence is 1-(5-phosphoribosyl)-5-[(5-phosphoribosylamino)methylideneamino] imidazole-4-carboxamide isomerase (245 aa).

The active-site Proton acceptor is the Asp-7. The active-site Proton donor is Asp-129.

This sequence belongs to the HisA/HisF family.

Its subcellular location is the cytoplasm. It catalyses the reaction 1-(5-phospho-beta-D-ribosyl)-5-[(5-phospho-beta-D-ribosylamino)methylideneamino]imidazole-4-carboxamide = 5-[(5-phospho-1-deoxy-D-ribulos-1-ylimino)methylamino]-1-(5-phospho-beta-D-ribosyl)imidazole-4-carboxamide. It functions in the pathway amino-acid biosynthesis; L-histidine biosynthesis; L-histidine from 5-phospho-alpha-D-ribose 1-diphosphate: step 4/9. The protein is 1-(5-phosphoribosyl)-5-[(5-phosphoribosylamino)methylideneamino] imidazole-4-carboxamide isomerase of Tolumonas auensis (strain DSM 9187 / NBRC 110442 / TA 4).